Reading from the N-terminus, the 309-residue chain is Oxygen-dependent coproporphyrinogen-III oxidase (309 aa).

Ser-100 is a binding site for substrate. 2 residues coordinate a divalent metal cation: His-104 and His-114. Residue His-114 is the Proton donor of the active site. Residue Asn-116–Arg-118 participates in substrate binding. The a divalent metal cation site is built by His-153 and His-183. Residues Tyr-248–Glu-283 form an important for dimerization region. Position 266 to 268 (Gly-266 to Arg-268) interacts with substrate.

It belongs to the aerobic coproporphyrinogen-III oxidase family. In terms of assembly, homodimer. Requires a divalent metal cation as cofactor.

The protein resides in the cytoplasm. The enzyme catalyses coproporphyrinogen III + O2 + 2 H(+) = protoporphyrinogen IX + 2 CO2 + 2 H2O. Its pathway is porphyrin-containing compound metabolism; protoporphyrin-IX biosynthesis; protoporphyrinogen-IX from coproporphyrinogen-III (O2 route): step 1/1. In terms of biological role, involved in the heme biosynthesis. Catalyzes the aerobic oxidative decarboxylation of propionate groups of rings A and B of coproporphyrinogen-III to yield the vinyl groups in protoporphyrinogen-IX. In Legionella pneumophila (strain Lens), this protein is Oxygen-dependent coproporphyrinogen-III oxidase.